Consider the following 136-residue polypeptide: Large ribosomal subunit protein uL16 (136 aa).

This sequence belongs to the universal ribosomal protein uL16 family. As to quaternary structure, part of the 50S ribosomal subunit.

Binds 23S rRNA and is also seen to make contacts with the A and possibly P site tRNAs. The protein is Large ribosomal subunit protein uL16 of Wigglesworthia glossinidia brevipalpis.